Consider the following 232-residue polypeptide: Glycerol-3-phosphate acyltransferase (232 aa).

6 helical membrane passes run F4–G24, A56–F76, I90–A110, M124–I144, T147–I167, and S191–H211.

The protein belongs to the PlsY family. As to quaternary structure, probably interacts with PlsX.

Its subcellular location is the cell inner membrane. The enzyme catalyses an acyl phosphate + sn-glycerol 3-phosphate = a 1-acyl-sn-glycero-3-phosphate + phosphate. Its pathway is lipid metabolism; phospholipid metabolism. Functionally, catalyzes the transfer of an acyl group from acyl-phosphate (acyl-PO(4)) to glycerol-3-phosphate (G3P) to form lysophosphatidic acid (LPA). This enzyme utilizes acyl-phosphate as fatty acyl donor, but not acyl-CoA or acyl-ACP. The polypeptide is Glycerol-3-phosphate acyltransferase (Chlorobaculum parvum (strain DSM 263 / NCIMB 8327) (Chlorobium vibrioforme subsp. thiosulfatophilum)).